A 218-amino-acid polypeptide reads, in one-letter code: Phosphatidylserine decarboxylase proenzyme (218 aa).

Catalysis depends on Ser183, which acts as the Schiff-base intermediate with substrate; via pyruvic acid. At Ser183 the chain carries Pyruvic acid (Ser); by autocatalysis.

It belongs to the phosphatidylserine decarboxylase family. PSD-A subfamily. Heterodimer of a large membrane-associated beta subunit and a small pyruvoyl-containing alpha subunit. Pyruvate serves as cofactor. Is synthesized initially as an inactive proenzyme. Formation of the active enzyme involves a self-maturation process in which the active site pyruvoyl group is generated from an internal serine residue via an autocatalytic post-translational modification. Two non-identical subunits are generated from the proenzyme in this reaction, and the pyruvate is formed at the N-terminus of the alpha chain, which is derived from the carboxyl end of the proenzyme. The post-translation cleavage follows an unusual pathway, termed non-hydrolytic serinolysis, in which the side chain hydroxyl group of the serine supplies its oxygen atom to form the C-terminus of the beta chain, while the remainder of the serine residue undergoes an oxidative deamination to produce ammonia and the pyruvoyl prosthetic group on the alpha chain.

It localises to the cell membrane. The enzyme catalyses a 1,2-diacyl-sn-glycero-3-phospho-L-serine + H(+) = a 1,2-diacyl-sn-glycero-3-phosphoethanolamine + CO2. Its pathway is phospholipid metabolism; phosphatidylethanolamine biosynthesis; phosphatidylethanolamine from CDP-diacylglycerol: step 2/2. In terms of biological role, catalyzes the formation of phosphatidylethanolamine (PtdEtn) from phosphatidylserine (PtdSer). The chain is Phosphatidylserine decarboxylase proenzyme from Magnetococcus marinus (strain ATCC BAA-1437 / JCM 17883 / MC-1).